We begin with the raw amino-acid sequence, 463 residues long: L-seryl-tRNA(Sec) selenium transferase (463 aa).

Lys-295 bears the N6-(pyridoxal phosphate)lysine mark.

This sequence belongs to the SelA family. Homodecamer; pentamer of dimers. Binds only one seryl-tRNA(Sec) per dimer. Pyridoxal 5'-phosphate serves as cofactor.

The protein resides in the cytoplasm. It catalyses the reaction L-seryl-tRNA(Sec) + selenophosphate + H(+) = L-selenocysteinyl-tRNA(Sec) + phosphate. It functions in the pathway aminoacyl-tRNA biosynthesis; selenocysteinyl-tRNA(Sec) biosynthesis; selenocysteinyl-tRNA(Sec) from L-seryl-tRNA(Sec) (bacterial route): step 1/1. Converts seryl-tRNA(Sec) to selenocysteinyl-tRNA(Sec) required for selenoprotein biosynthesis. This Escherichia coli O45:K1 (strain S88 / ExPEC) protein is L-seryl-tRNA(Sec) selenium transferase.